The following is a 55-amino-acid chain: Large ribosomal subunit protein bL33 (55 aa).

The span at 1 to 11 (MAKGGREKIKL) shows a compositional bias: basic and acidic residues. A disordered region spans residues 1-29 (MAKGGREKIKLESSAGTGHFYTTSKNKRT). Polar residues predominate over residues 14–24 (SAGTGHFYTTS).

This sequence belongs to the bacterial ribosomal protein bL33 family.

The protein is Large ribosomal subunit protein bL33 of Polynucleobacter asymbioticus (strain DSM 18221 / CIP 109841 / QLW-P1DMWA-1) (Polynucleobacter necessarius subsp. asymbioticus).